Consider the following 175-residue polypeptide: Small ribosomal subunit protein mS38 (175 aa).

It belongs to the mitochondrion-specific ribosomal protein mS38 family. Component of the mitochondrial small ribosomal subunit (mt-SSU). Mature yeast 74S mitochondrial ribosomes consist of a small (37S) and a large (54S) subunit. The 37S small subunit contains a 15S ribosomal RNA (15S mt-rRNA) and at least 32 different proteins. The 54S large subunit contains a 21S rRNA (21S mt-rRNA) and at least 45 different proteins.

The protein localises to the mitochondrion. It localises to the mitochondrion inner membrane. Its function is as follows. Component of the mitochondrial ribosome (mitoribosome), a dedicated translation machinery responsible for the synthesis of mitochondrial genome-encoded proteins, including at least some of the essential transmembrane subunits of the mitochondrial respiratory chain. The mitoribosomes are attached to the mitochondrial inner membrane and translation products are cotranslationally integrated into the membrane. mS38 is also involved in the splicing of the COX1 mRNA. The polypeptide is Small ribosomal subunit protein mS38 (cox24) (Schizosaccharomyces pombe (strain 972 / ATCC 24843) (Fission yeast)).